The following is a 271-amino-acid chain: MPELPEVETTRRGIERHVTGRRVTSVIVREPRLRWPVPGDLAERLTGHTLGRVLRRAKYLLIEVDTGLLLLHLGMSGSLRVVTPDAPLRKHDHIDLCLDSGRCLRLHDPRRFGAVLWIEGPAHAHPLLAELGPEPLGKDFDADYLFRSTRKRRVAIKQHIMNSHVVVGVGNIYASEALFLAGIRPGRAAGRLTRAECARLVETIRQVLGEAIAQGGTTLRDFVREDGSHGYFQQHLRVYGRTGLACMACETPVKQIVQGNRSTYYCPACQR.

The active-site Schiff-base intermediate with DNA is P2. The Proton donor role is filled by E3. K58 serves as the catalytic Proton donor; for beta-elimination activity. 3 residues coordinate DNA: H91, R110, and R152. The FPG-type zinc finger occupies 237-271 (RVYGRTGLACMACETPVKQIVQGNRSTYYCPACQR). The active-site Proton donor; for delta-elimination activity is R261.

It belongs to the FPG family. As to quaternary structure, monomer. It depends on Zn(2+) as a cofactor.

It carries out the reaction Hydrolysis of DNA containing ring-opened 7-methylguanine residues, releasing 2,6-diamino-4-hydroxy-5-(N-methyl)formamidopyrimidine.. The enzyme catalyses 2'-deoxyribonucleotide-(2'-deoxyribose 5'-phosphate)-2'-deoxyribonucleotide-DNA = a 3'-end 2'-deoxyribonucleotide-(2,3-dehydro-2,3-deoxyribose 5'-phosphate)-DNA + a 5'-end 5'-phospho-2'-deoxyribonucleoside-DNA + H(+). Involved in base excision repair of DNA damaged by oxidation or by mutagenic agents. Acts as a DNA glycosylase that recognizes and removes damaged bases. Has a preference for oxidized purines, such as 7,8-dihydro-8-oxoguanine (8-oxoG). Has AP (apurinic/apyrimidinic) lyase activity and introduces nicks in the DNA strand. Cleaves the DNA backbone by beta-delta elimination to generate a single-strand break at the site of the removed base with both 3'- and 5'-phosphates. This Thioalkalivibrio sulfidiphilus (strain HL-EbGR7) protein is Formamidopyrimidine-DNA glycosylase.